The chain runs to 957 residues: Protein translocase subunit SecA (957 aa).

Residues Gln-86, 104–108, and Asp-494 each bind ATP; that span reads GEGKT. Residues 929 to 947 show a composition bias toward low complexity; it reads SRPAPAPTAAASPDPSSAS. A disordered region spans residues 929-957; sequence SRPAPAPTAAASPDPSSASGVVEADFTEE.

This sequence belongs to the SecA family. Monomer and homodimer. Part of the essential Sec protein translocation apparatus which comprises SecA, SecYEG and auxiliary proteins SecDF. Other proteins may also be involved.

It localises to the cell inner membrane. The protein localises to the cellular thylakoid membrane. The protein resides in the cytoplasm. It carries out the reaction ATP + H2O + cellular proteinSide 1 = ADP + phosphate + cellular proteinSide 2.. Functionally, part of the Sec protein translocase complex. Interacts with the SecYEG preprotein conducting channel. Has a central role in coupling the hydrolysis of ATP to the transfer of proteins into and across the cell membrane, serving as an ATP-driven molecular motor driving the stepwise translocation of polypeptide chains across the membrane. Its function is as follows. Probably participates in protein translocation into and across both the cytoplasmic and thylakoid membranes in cyanobacterial cells. This chain is Protein translocase subunit SecA, found in Synechococcus sp. (strain JA-2-3B'a(2-13)) (Cyanobacteria bacterium Yellowstone B-Prime).